The primary structure comprises 121 residues: Large ribosomal subunit protein uL14 (121 aa).

This sequence belongs to the universal ribosomal protein uL14 family. Part of the 50S ribosomal subunit. Forms a cluster with proteins L3 and L19. In the 70S ribosome, L14 and L19 interact and together make contacts with the 16S rRNA in bridges B5 and B8.

In terms of biological role, binds to 23S rRNA. Forms part of two intersubunit bridges in the 70S ribosome. This chain is Large ribosomal subunit protein uL14, found in Hydrogenobaculum sp. (strain Y04AAS1).